The chain runs to 177 residues: Large ribosomal subunit protein uL6 (177 aa).

Belongs to the universal ribosomal protein uL6 family. In terms of assembly, part of the 50S ribosomal subunit.

Its function is as follows. This protein binds to the 23S rRNA, and is important in its secondary structure. It is located near the subunit interface in the base of the L7/L12 stalk, and near the tRNA binding site of the peptidyltransferase center. The protein is Large ribosomal subunit protein uL6 of Rhodopseudomonas palustris (strain BisA53).